We begin with the raw amino-acid sequence, 345 residues long: UPF0324 membrane protein Cgl0015/cg0018 (345 aa).

10 helical membrane passes run L15–A37, F44–L66, L81–F103, M105–G124, V134–T156, V163–T185, E205–V227, V261–A280, V285–G307, and P320–T342.

This sequence belongs to the UPF0324 family.

It is found in the cell membrane. This is UPF0324 membrane protein Cgl0015/cg0018 from Corynebacterium glutamicum (strain ATCC 13032 / DSM 20300 / JCM 1318 / BCRC 11384 / CCUG 27702 / LMG 3730 / NBRC 12168 / NCIMB 10025 / NRRL B-2784 / 534).